The sequence spans 227 residues: uncharacterized protein (227 aa).

A run of 2 helical transmembrane segments spans residues 12–32 (IVLFLIINILPILILGLYLYA) and 80–100 (IILINGIYIGNHGSFGIKIPL).

Its subcellular location is the cell membrane. This is an uncharacterized protein from Methanocaldococcus jannaschii (strain ATCC 43067 / DSM 2661 / JAL-1 / JCM 10045 / NBRC 100440) (Methanococcus jannaschii).